We begin with the raw amino-acid sequence, 325 residues long: uncharacterized protein (325 aa).

The 103-residue stretch at 49–151 (RYEHSIGVML…ELCADRTDYT (103 aa)) folds into the HD domain.

This is an uncharacterized protein from Bacillus subtilis (strain 168).